The chain runs to 217 residues: MKFFIDTANVDEIKKANDMGVICGVTTNPSLIAKEGRDFKKTIEEITTIVDGPISGEVKATTVKAEDMIAEAREIAKIHKNMVVKIPMTVEGLKAVKVLSKEGIKTNVTLIFSANQALLAARAGATYVSPFIGRLDDISMDGLELIRTISEIFATHAIETEIISASVRHPIHVTECALAGADIATVPYSVIEQMTKHPLTDQGIEKFKKDYEAVFGK.

The Schiff-base intermediate with substrate role is filled by Lys-85.

It belongs to the transaldolase family. Type 3B subfamily.

The protein localises to the cytoplasm. The enzyme catalyses D-sedoheptulose 7-phosphate + D-glyceraldehyde 3-phosphate = D-erythrose 4-phosphate + beta-D-fructose 6-phosphate. The protein operates within carbohydrate degradation; pentose phosphate pathway; D-glyceraldehyde 3-phosphate and beta-D-fructose 6-phosphate from D-ribose 5-phosphate and D-xylulose 5-phosphate (non-oxidative stage): step 2/3. Its function is as follows. Transaldolase is important for the balance of metabolites in the pentose-phosphate pathway. This chain is Probable transaldolase, found in Brachyspira hyodysenteriae (strain ATCC 49526 / WA1).